The following is a 176-amino-acid chain: N5-carboxyaminoimidazole ribonucleotide mutase (176 aa).

The substrate site is built by S14, D17, and R44.

Belongs to the AIR carboxylase family. Class I subfamily.

It carries out the reaction 5-carboxyamino-1-(5-phospho-D-ribosyl)imidazole + H(+) = 5-amino-1-(5-phospho-D-ribosyl)imidazole-4-carboxylate. It functions in the pathway purine metabolism; IMP biosynthesis via de novo pathway; 5-amino-1-(5-phospho-D-ribosyl)imidazole-4-carboxylate from 5-amino-1-(5-phospho-D-ribosyl)imidazole (N5-CAIR route): step 2/2. Functionally, catalyzes the conversion of N5-carboxyaminoimidazole ribonucleotide (N5-CAIR) to 4-carboxy-5-aminoimidazole ribonucleotide (CAIR). This Synechocystis sp. (strain ATCC 27184 / PCC 6803 / Kazusa) protein is N5-carboxyaminoimidazole ribonucleotide mutase.